The following is a 456-amino-acid chain: MALKIYNTETRQKETFTPIQPNKVGLYVCGVTVYDYCHVGHARVMVVFDTVVRHLRSLGYDVTYVRNITDIDDKIIQRALENKESIQSLTSRFIDAMHEDEKALNVLRPDMEPKATEYMDEIETMISTLIEKDFAYPAENGDVYFHVKADDDYGRLSGKNIEELDSGSRVEINSVKKDPLDFVLWKASKENEPAWQSPWGDGRPGWHIECSAMSTKCLGNHFDIHGGGLDLSFPHHENEIAQSECATGEHYVNSWMHCGFVRIDDEKMSKSLGNFFTIREVLKQYHPEVIRYFLLASHYRSPVNYSEENLDVAKASVGRLYSALELVPADQAEPAESKLEAEFMAAMNDDFNTPQAMAVLFELAKEVNKQKSPGLAALLKKLANQIGLLEQTAESFFKSQPSDSDLTDEMIEALIVERAEARKAKDFSRSDEIRDELLAQGIELLDSAEGTSWRKI.

A Zn(2+)-binding site is contributed by C29. Residues 31 to 41 carry the 'HIGH' region motif; that stretch reads VTVYDYCHVGH. Residues C210, H235, and E239 each coordinate Zn(2+). The short motif at 267–271 is the 'KMSKS' region element; that stretch reads KMSKS. K270 contributes to the ATP binding site.

This sequence belongs to the class-I aminoacyl-tRNA synthetase family. As to quaternary structure, monomer. The cofactor is Zn(2+).

It is found in the cytoplasm. It carries out the reaction tRNA(Cys) + L-cysteine + ATP = L-cysteinyl-tRNA(Cys) + AMP + diphosphate. The polypeptide is Cysteine--tRNA ligase (Hydrogenovibrio crunogenus (strain DSM 25203 / XCL-2) (Thiomicrospira crunogena)).